Here is a 336-residue protein sequence, read N- to C-terminus: 3-isopropylmalate dehydrogenase (336 aa).

4 residues coordinate substrate: Arg-87, Arg-97, Arg-121, and Asp-211. Residues Asp-211, Asp-235, and Asp-239 each contribute to the Mg(2+) site. Gly-271 to Asp-283 lines the NAD(+) pocket.

Belongs to the isocitrate and isopropylmalate dehydrogenases family. LeuB type 2 subfamily. As to quaternary structure, homodimer. The cofactor is Mg(2+). Mn(2+) serves as cofactor.

It is found in the cytoplasm. The enzyme catalyses (2R,3S)-3-isopropylmalate + NAD(+) = 4-methyl-2-oxopentanoate + CO2 + NADH. The protein operates within amino-acid biosynthesis; L-leucine biosynthesis; L-leucine from 3-methyl-2-oxobutanoate: step 3/4. Its function is as follows. Catalyzes the oxidation of 3-carboxy-2-hydroxy-4-methylpentanoate (3-isopropylmalate) to 3-carboxy-4-methyl-2-oxopentanoate. The product decarboxylates to 4-methyl-2 oxopentanoate. The polypeptide is 3-isopropylmalate dehydrogenase (Mycobacterium leprae (strain Br4923)).